The following is a 62-amino-acid chain: Bacteriocin piscicolin-126 (62 aa).

The propeptide occupies 1 to 18 (MKTVKELSVKEMQLTTGG). Cys27 and Cys32 are disulfide-bonded.

It is found in the secreted. Its function is as follows. Inhibits the growth of several Gram-positive bacteria, especially the food-borne pathogen L.monocytogenes, but has no effect on the growth of a number of yeasts and Gram-negative bacteria. In Carnobacterium maltaromaticum (Carnobacterium piscicola), this protein is Bacteriocin piscicolin-126 (pisA).